Reading from the N-terminus, the 449-residue chain is Tubulin alpha chain (449 aa).

GTP is bound by residues Q11, E71, S140, G144, T145, T179, N206, and N228. Mg(2+) is bound at residue E71. Residue E254 is part of the active site.

Belongs to the tubulin family. Dimer of alpha and beta chains. A typical microtubule is a hollow water-filled tube with an outer diameter of 25 nm and an inner diameter of 15 nM. Alpha-beta heterodimers associate head-to-tail to form protofilaments running lengthwise along the microtubule wall with the beta-tubulin subunit facing the microtubule plus end conferring a structural polarity. Microtubules usually have 13 protofilaments but different protofilament numbers can be found in some organisms and specialized cells. Mg(2+) serves as cofactor.

Its subcellular location is the cytoplasm. The protein localises to the cytoskeleton. It catalyses the reaction GTP + H2O = GDP + phosphate + H(+). In terms of biological role, tubulin is the major constituent of microtubules, a cylinder consisting of laterally associated linear protofilaments composed of alpha- and beta-tubulin heterodimers. Microtubules grow by the addition of GTP-tubulin dimers to the microtubule end, where a stabilizing cap forms. Below the cap, tubulin dimers are in GDP-bound state, owing to GTPase activity of alpha-tubulin. The sequence is that of Tubulin alpha chain (TUBA) from Sordaria macrospora (strain ATCC MYA-333 / DSM 997 / K(L3346) / K-hell).